The primary structure comprises 77 residues: Tautomerase PptA (77 aa).

Pro2 serves as the catalytic Proton acceptor; via imino nitrogen.

It belongs to the 4-oxalocrotonate tautomerase family. PptA subfamily. Homodimer.

It is found in the cytoplasm. The chain is Tautomerase PptA from Escherichia coli (strain K12 / MC4100 / BW2952).